A 147-amino-acid chain; its full sequence is Large ribosomal subunit protein uL13 (147 aa).

The protein belongs to the universal ribosomal protein uL13 family. Part of the 50S ribosomal subunit.

This protein is one of the early assembly proteins of the 50S ribosomal subunit, although it is not seen to bind rRNA by itself. It is important during the early stages of 50S assembly. In Mycolicibacterium smegmatis (strain ATCC 700084 / mc(2)155) (Mycobacterium smegmatis), this protein is Large ribosomal subunit protein uL13.